The primary structure comprises 142 residues: Hemoglobin subunit alpha (142 aa).

Residue S1 is modified to N-acetylserine. The 142-residue stretch at 1 to 142 (SLSDKDKAAV…VALALAERYR (142 aa)) folds into the Globin domain. H59 is an O2 binding site. A heme b-binding site is contributed by H88.

This sequence belongs to the globin family. In terms of assembly, hb1 is a heterotetramer of two alpha chains and two beta-1 chains, while Hb2 is a heterotetramer of two alpha chains and two beta-2 chains. Red blood cells.

Involved in oxygen transport from gills to the various peripheral tissues. In Cygnodraco mawsoni (Antarctic dragonfish), this protein is Hemoglobin subunit alpha (hba).